A 152-amino-acid polypeptide reads, in one-letter code: Transcription elongation factor Spt5 (152 aa).

One can recognise a KOW domain in the interval 94–124 (PGDLVEVIAGPFKGQKAKVVKIDESKDEVVV).

Belongs to the archaeal Spt5 family. Heterodimer composed of Spt4 and Spt5. Interacts with RNA polymerase (RNAP) independently of nucleic acids. Forms a homodimer in solution.

Stimulates transcription elongation. In Pyrococcus furiosus (strain ATCC 43587 / DSM 3638 / JCM 8422 / Vc1), this protein is Transcription elongation factor Spt5.